The primary structure comprises 40 residues: MIGGLFLNTLSFVIVINHVIVNNTANVHTTQHENVIVQQH.

The protein belongs to the coronaviruses NS3b protein family.

The sequence is that of Putative truncated non-structural protein 3b from Feline coronavirus (strain FIPV WSU-79/1146) (FCoV).